Consider the following 228-residue polypeptide: Urease accessory protein UreF (228 aa).

The protein belongs to the UreF family. As to quaternary structure, ureD, UreF and UreG form a complex that acts as a GTP-hydrolysis-dependent molecular chaperone, activating the urease apoprotein by helping to assemble the nickel containing metallocenter of UreC. The UreE protein probably delivers the nickel.

Its subcellular location is the cytoplasm. Functionally, required for maturation of urease via the functional incorporation of the urease nickel metallocenter. This Prochlorococcus marinus (strain MIT 9312) protein is Urease accessory protein UreF.